The sequence spans 132 residues: MAVNDPLGDMLTRIRNAQMRRKGKVQTPGSRLRAHVLDVLQSEGYIRGYSTTEYGNGRTEFEVELKYFDGLPVIREIQRVSKPGRRVYAAVDAMPRVANGLGITIVSTPKGVMADHAAREANVGGEVLCRVF.

Belongs to the universal ribosomal protein uS8 family. In terms of assembly, part of the 30S ribosomal subunit. Contacts proteins S5 and S12.

One of the primary rRNA binding proteins, it binds directly to 16S rRNA central domain where it helps coordinate assembly of the platform of the 30S subunit. The polypeptide is Small ribosomal subunit protein uS8 (Methylocella silvestris (strain DSM 15510 / CIP 108128 / LMG 27833 / NCIMB 13906 / BL2)).